Consider the following 159-residue polypeptide: 2-C-methyl-D-erythritol 2,4-cyclodiphosphate synthase (159 aa).

Asp-8 and His-10 together coordinate a divalent metal cation. 4-CDP-2-C-methyl-D-erythritol 2-phosphate-binding positions include 8 to 10 and 34 to 35; these read DVH and HS. An a divalent metal cation-binding site is contributed by His-42. Residues 56-58, 61-65, 100-106, 132-135, Phe-139, and Arg-142 each bind 4-CDP-2-C-methyl-D-erythritol 2-phosphate; these read DIG, FPDTD, AQAPKML, and TTTE.

It belongs to the IspF family. In terms of assembly, homotrimer. It depends on a divalent metal cation as a cofactor.

It carries out the reaction 4-CDP-2-C-methyl-D-erythritol 2-phosphate = 2-C-methyl-D-erythritol 2,4-cyclic diphosphate + CMP. It functions in the pathway isoprenoid biosynthesis; isopentenyl diphosphate biosynthesis via DXP pathway; isopentenyl diphosphate from 1-deoxy-D-xylulose 5-phosphate: step 4/6. Functionally, involved in the biosynthesis of isopentenyl diphosphate (IPP) and dimethylallyl diphosphate (DMAPP), two major building blocks of isoprenoid compounds. Catalyzes the conversion of 4-diphosphocytidyl-2-C-methyl-D-erythritol 2-phosphate (CDP-ME2P) to 2-C-methyl-D-erythritol 2,4-cyclodiphosphate (ME-CPP) with a corresponding release of cytidine 5-monophosphate (CMP). This is 2-C-methyl-D-erythritol 2,4-cyclodiphosphate synthase from Salmonella arizonae (strain ATCC BAA-731 / CDC346-86 / RSK2980).